The following is a 218-amino-acid chain: Eukaryotic translation initiation factor 3 subunit K (218 aa).

Ala-2 carries the N-acetylalanine modification. A Phosphothreonine modification is found at Thr-28. Positions 42–204 (YDLEANLAVL…SIKPKNIVEK (163 aa)) constitute a PCI domain. Position 217 is a phosphoserine (Ser-217).

Belongs to the eIF-3 subunit K family. Component of the eukaryotic translation initiation factor 3 (eIF-3) complex, which is composed of 13 subunits: EIF3A, EIF3B, EIF3C, EIF3D, EIF3E, EIF3F, EIF3G, EIF3H, EIF3I, EIF3J, EIF3K, EIF3L and EIF3M. The eIF-3 complex appears to include 3 stable modules: module A is composed of EIF3A, EIF3B, EIF3G and EIF3I; module B is composed of EIF3F, EIF3H, and EIF3M; and module C is composed of EIF3C, EIF3D, EIF3E, EIF3K and EIF3L. EIF3C of module C binds EIF3B of module A and EIF3H of module B, thereby linking the three modules. EIF3J is a labile subunit that binds to the eIF-3 complex via EIF3B. The eIF-3 complex interacts with RPS6KB1 under conditions of nutrient depletion. Mitogenic stimulation leads to binding and activation of a complex composed of MTOR and RPTOR, leading to phosphorylation and release of RPS6KB1 and binding of EIF4B to eIF-3. Interacts with CCND3, but not with CCND1 and CCND2.

The protein resides in the nucleus. Its subcellular location is the cytoplasm. Functionally, component of the eukaryotic translation initiation factor 3 (eIF-3) complex, which is required for several steps in the initiation of protein synthesis. The eIF-3 complex associates with the 40S ribosome and facilitates the recruitment of eIF-1, eIF-1A, eIF-2:GTP:methionyl-tRNAi and eIF-5 to form the 43S pre-initiation complex (43S PIC). The eIF-3 complex stimulates mRNA recruitment to the 43S PIC and scanning of the mRNA for AUG recognition. The eIF-3 complex is also required for disassembly and recycling of post-termination ribosomal complexes and subsequently prevents premature joining of the 40S and 60S ribosomal subunits prior to initiation. The eIF-3 complex specifically targets and initiates translation of a subset of mRNAs involved in cell proliferation, including cell cycling, differentiation and apoptosis, and uses different modes of RNA stem-loop binding to exert either translational activation or repression. This chain is Eukaryotic translation initiation factor 3 subunit K, found in Bos taurus (Bovine).